The following is a 141-amino-acid chain: Nucleoside diphosphate kinase (141 aa).

ATP-binding residues include K11, F59, R87, T93, R104, and N114. H117 functions as the Pros-phosphohistidine intermediate in the catalytic mechanism.

It belongs to the NDK family. In terms of assembly, homotetramer. Mg(2+) serves as cofactor.

It is found in the cytoplasm. It carries out the reaction a 2'-deoxyribonucleoside 5'-diphosphate + ATP = a 2'-deoxyribonucleoside 5'-triphosphate + ADP. The enzyme catalyses a ribonucleoside 5'-diphosphate + ATP = a ribonucleoside 5'-triphosphate + ADP. Major role in the synthesis of nucleoside triphosphates other than ATP. The ATP gamma phosphate is transferred to the NDP beta phosphate via a ping-pong mechanism, using a phosphorylated active-site intermediate. The protein is Nucleoside diphosphate kinase of Paraburkholderia phymatum (strain DSM 17167 / CIP 108236 / LMG 21445 / STM815) (Burkholderia phymatum).